The sequence spans 248 residues: Mannosylfructose-phosphate phosphatase (248 aa).

Belongs to the sucrose phosphatase family.

It carries out the reaction beta-D-fructofuranosyl alpha-D-mannopyranoside 6(F)-phosphate + H2O = beta-D-fructofuranosyl alpha-D-mannopyranoside + phosphate. Its pathway is carbohydrate metabolism; mannosylfructose biosynthesis; beta-D-fructofuranosyl alpha-D-mannopyranoside from D-fructose 6-phosphate and GDP-alpha-D-mannose: step 2/2. With respect to regulation, inhibited by the phosphatase inhibitors fluoride, molybdate and orthovanadate. This is Mannosylfructose-phosphate phosphatase from Agrobacterium fabrum (strain C58 / ATCC 33970) (Agrobacterium tumefaciens (strain C58)).